Here is a 306-residue protein sequence, read N- to C-terminus: Ribonuclease Z (306 aa).

The Zn(2+) site is built by H63, H65, D67, H68, H141, D208, and H266. Residue D67 is the Proton acceptor of the active site.

It belongs to the RNase Z family. In terms of assembly, homodimer. Zn(2+) serves as cofactor.

The enzyme catalyses Endonucleolytic cleavage of RNA, removing extra 3' nucleotides from tRNA precursor, generating 3' termini of tRNAs. A 3'-hydroxy group is left at the tRNA terminus and a 5'-phosphoryl group is left at the trailer molecule.. Its function is as follows. Zinc phosphodiesterase, which displays some tRNA 3'-processing endonuclease activity. Probably involved in tRNA maturation, by removing a 3'-trailer from precursor tRNA. This Chlamydia caviae (strain ATCC VR-813 / DSM 19441 / 03DC25 / GPIC) (Chlamydophila caviae) protein is Ribonuclease Z.